Reading from the N-terminus, the 218-residue chain is LexA repressor (218 aa).

Residues 28–48 constitute a DNA-binding region (H-T-H motif); that stretch reads RAEIAAEFGFSSPNAAEEHLR. Active-site for autocatalytic cleavage activity residues include serine 136 and lysine 173.

The protein belongs to the peptidase S24 family. Homodimer.

The enzyme catalyses Hydrolysis of Ala-|-Gly bond in repressor LexA.. Represses a number of genes involved in the response to DNA damage (SOS response), including recA and lexA. In the presence of single-stranded DNA, RecA interacts with LexA causing an autocatalytic cleavage which disrupts the DNA-binding part of LexA, leading to derepression of the SOS regulon and eventually DNA repair. The polypeptide is LexA repressor (Cupriavidus pinatubonensis (strain JMP 134 / LMG 1197) (Cupriavidus necator (strain JMP 134))).